Consider the following 477-residue polypeptide: Glycogen synthase (477 aa).

Lys-15 serves as a coordination point for ADP-alpha-D-glucose.

This sequence belongs to the glycosyltransferase 1 family. Bacterial/plant glycogen synthase subfamily.

The enzyme catalyses [(1-&gt;4)-alpha-D-glucosyl](n) + ADP-alpha-D-glucose = [(1-&gt;4)-alpha-D-glucosyl](n+1) + ADP + H(+). It functions in the pathway glycan biosynthesis; glycogen biosynthesis. In terms of biological role, synthesizes alpha-1,4-glucan chains using ADP-glucose. The sequence is that of Glycogen synthase from Escherichia coli O139:H28 (strain E24377A / ETEC).